Reading from the N-terminus, the 319-residue chain is Probable alcohol dehydrogenase (319 aa).

Residues Cys-18, His-39, Cys-68, Cys-71, Cys-74, Cys-82, and Cys-149 each contribute to the Zn(2+) site.

This sequence belongs to the zinc-containing alcohol dehydrogenase family. Zn(2+) is required as a cofactor.

It carries out the reaction a primary alcohol + NAD(+) = an aldehyde + NADH + H(+). It catalyses the reaction a secondary alcohol + NAD(+) = a ketone + NADH + H(+). This Pseudomonas sp protein is Probable alcohol dehydrogenase (terPD).